A 20-amino-acid polypeptide reads, in one-letter code: Zinc metalloproteinase-disintegrin-like uracoina-1 (20 aa).

The protein belongs to the venom metalloproteinase (M12B) family. P-III subfamily. As to quaternary structure, monomer. Zn(2+) serves as cofactor. Expressed by the venom gland.

Its subcellular location is the secreted. With respect to regulation, inhibited by ethylenediaminetetraacetic acid (EDTA) and 1,10-phenanthroline. Not inhibited by tosyl-L-lysine chloromethyl ketone (TCLK) and phenylmethanesulfonylfluoride (PMSF). Snake venom zinc metalloprotease that possesses hemorrhagic activity (minimum hemorrhagic dose, MHD=4.7 ug) when injected intradermally into mice. Degrades the alpha-chain of fibrinogen (FGA). The chain is Zinc metalloproteinase-disintegrin-like uracoina-1 from Crotalus vegrandis (Uracoan rattlesnake).